A 423-amino-acid chain; its full sequence is Histidine--tRNA ligase (423 aa).

Belongs to the class-II aminoacyl-tRNA synthetase family. In terms of assembly, homodimer.

It localises to the cytoplasm. The enzyme catalyses tRNA(His) + L-histidine + ATP = L-histidyl-tRNA(His) + AMP + diphosphate + H(+). In Haemophilus ducreyi (strain 35000HP / ATCC 700724), this protein is Histidine--tRNA ligase.